A 362-amino-acid chain; its full sequence is Putative transport protein BB_0006 (362 aa).

Transmembrane regions (helical) follow at residues phenylalanine 20–phenylalanine 40, leucine 43–phenylalanine 63, phenylalanine 68–phenylalanine 88, glutamate 144–serine 164, isoleucine 212–leucine 232, phenylalanine 234–threonine 254, isoleucine 265–glutamate 285, and leucine 304–valine 326.

It belongs to the autoinducer-2 exporter (AI-2E) (TC 2.A.86) family.

It is found in the cell membrane. This is Putative transport protein BB_0006 from Borreliella burgdorferi (strain ATCC 35210 / DSM 4680 / CIP 102532 / B31) (Borrelia burgdorferi).